The following is a 357-amino-acid chain: Chorismate synthase (357 aa).

R48 lines the NADP(+) pocket. Residues R125–S127, N238–A239, G282, K297–S301, and R323 contribute to the FMN site.

This sequence belongs to the chorismate synthase family. In terms of assembly, homotetramer. The cofactor is FMNH2.

It carries out the reaction 5-O-(1-carboxyvinyl)-3-phosphoshikimate = chorismate + phosphate. Its pathway is metabolic intermediate biosynthesis; chorismate biosynthesis; chorismate from D-erythrose 4-phosphate and phosphoenolpyruvate: step 7/7. Functionally, catalyzes the anti-1,4-elimination of the C-3 phosphate and the C-6 proR hydrogen from 5-enolpyruvylshikimate-3-phosphate (EPSP) to yield chorismate, which is the branch point compound that serves as the starting substrate for the three terminal pathways of aromatic amino acid biosynthesis. This reaction introduces a second double bond into the aromatic ring system. This Gluconacetobacter diazotrophicus (strain ATCC 49037 / DSM 5601 / CCUG 37298 / CIP 103539 / LMG 7603 / PAl5) protein is Chorismate synthase.